A 130-amino-acid polypeptide reads, in one-letter code: Small ribosomal subunit protein uS11 (130 aa).

It belongs to the universal ribosomal protein uS11 family. Part of the 30S ribosomal subunit. Interacts with proteins S7 and S18. Binds to IF-3.

Its function is as follows. Located on the platform of the 30S subunit, it bridges several disparate RNA helices of the 16S rRNA. Forms part of the Shine-Dalgarno cleft in the 70S ribosome. This chain is Small ribosomal subunit protein uS11, found in Alteromonas mediterranea (strain DSM 17117 / CIP 110805 / LMG 28347 / Deep ecotype).